Reading from the N-terminus, the 70-residue chain is DNA-directed RNA polymerases I, II, and III subunit rpabc5 (70 aa).

Zn(2+) is bound by residues C7, C10, C44, and C45.

Belongs to the archaeal Rpo10/eukaryotic RPB10 RNA polymerase subunit family. Component of the RNA polymerase I (Pol I), RNA polymerase II (Pol II) and RNA polymerase III (Pol III) complexes.

The protein resides in the nucleus. Functionally, DNA-dependent RNA polymerase catalyzes the transcription of DNA into RNA using the four ribonucleoside triphosphates as substrates. Common component of RNA polymerases I, II and III which synthesize ribosomal RNA precursors, mRNA precursors and many functional non-coding RNAs, and a small RNAs, such as 5S rRNA and tRNAs, respectively. Pol II is the central component of the basal RNA polymerase II transcription machinery. Pols are composed of mobile elements that move relative to each other. In Pol II, RBP10 is part of the core element with the central large cleft. This chain is DNA-directed RNA polymerases I, II, and III subunit rpabc5 (polr2l), found in Dictyostelium discoideum (Social amoeba).